The sequence spans 257 residues: NAD-capped RNA hydrolase NudC (257 aa).

A substrate-binding site is contributed by arginine 69. Positions 98 and 101 each coordinate Zn(2+). Glutamate 111 lines the substrate pocket. Zn(2+) contacts are provided by cysteine 116 and cysteine 119. Tyrosine 124 contacts substrate. One can recognise a Nudix hydrolase domain in the interval 125–248 (PQIAPCIIVA…TVARRLIEDT (124 aa)). Positions 158, 174, and 178 each coordinate a divalent metal cation. Residues 159 to 180 (GFVEVGETLEQAVAREVMEESG) carry the Nudix box motif. Residue 192-199 (QPWPFPQS) participates in substrate binding. Glutamate 219 provides a ligand contact to a divalent metal cation. Alanine 241 contacts substrate.

This sequence belongs to the Nudix hydrolase family. NudC subfamily. As to quaternary structure, homodimer. Mg(2+) serves as cofactor. Requires Mn(2+) as cofactor. Zn(2+) is required as a cofactor.

It carries out the reaction a 5'-end NAD(+)-phospho-ribonucleoside in mRNA + H2O = a 5'-end phospho-adenosine-phospho-ribonucleoside in mRNA + beta-nicotinamide D-ribonucleotide + 2 H(+). The enzyme catalyses NAD(+) + H2O = beta-nicotinamide D-ribonucleotide + AMP + 2 H(+). It catalyses the reaction NADH + H2O = reduced beta-nicotinamide D-ribonucleotide + AMP + 2 H(+). MRNA decapping enzyme that specifically removes the nicotinamide adenine dinucleotide (NAD) cap from a subset of mRNAs by hydrolyzing the diphosphate linkage to produce nicotinamide mononucleotide (NMN) and 5' monophosphate mRNA. The NAD-cap is present at the 5'-end of some mRNAs and stabilizes RNA against 5'-processing. Has preference for mRNAs with a 5'-end purine. Catalyzes the hydrolysis of a broad range of dinucleotide pyrophosphates. The sequence is that of NAD-capped RNA hydrolase NudC from Salmonella typhimurium (strain LT2 / SGSC1412 / ATCC 700720).